A 312-amino-acid chain; its full sequence is NADPH-dependent alpha-keto amide reductase (312 aa).

Residues G25, T26, R27, and D59 each contribute to the NADPH site. Catalysis depends on proton donor residues Y64 and H122. The residue at position 123 (S123) is a Phosphoserine. Positions 157, 179, 208, 210, 257, 258, 259, 260, 261, and 264 each coordinate NADPH.

It belongs to the aldo/keto reductase family. As to quaternary structure, monomer. In terms of processing, the N-terminus is blocked.

The protein resides in the cytoplasm. It is found in the nucleus. Functionally, reduces aromatic alpha-keto amides, aliphatic and aromatic alpha-keto esters, but not beta-keto esters. In Saccharomyces cerevisiae (strain ATCC 204508 / S288c) (Baker's yeast), this protein is NADPH-dependent alpha-keto amide reductase.